The sequence spans 379 residues: Homoserine O-acetyltransferase (379 aa).

A disordered region spans residues 1–24 (MSHDTTPPLPATGAWREGDPPGDR). The 306-residue stretch at 60-365 (NAVLVLHALT…ASGHDGFLTE (306 aa)) folds into the AB hydrolase-1 domain. Catalysis depends on serine 165, which acts as the Nucleophile. Arginine 236 contributes to the substrate binding site. Residues aspartate 329 and histidine 359 contribute to the active site. Aspartate 360 contacts substrate.

The protein belongs to the AB hydrolase superfamily. MetX family. Homodimer.

It localises to the cytoplasm. It carries out the reaction L-homoserine + acetyl-CoA = O-acetyl-L-homoserine + CoA. The protein operates within amino-acid biosynthesis; L-methionine biosynthesis via de novo pathway; O-acetyl-L-homoserine from L-homoserine: step 1/1. Its function is as follows. Transfers an acetyl group from acetyl-CoA to L-homoserine, forming acetyl-L-homoserine. This Thermobifida fusca (strain YX) protein is Homoserine O-acetyltransferase.